The primary structure comprises 340 residues: Replication factor C subunit 2 (340 aa).

Gly59–Thr66 is a binding site for ATP.

It belongs to the activator 1 small subunits family. In terms of assembly, heteropentamer of subunits rfc1, rfc2, rfc3, rfc4 and rfc5 that forms a complex (RFC) with PCNA in the presence of ATP. Two other complexes exist where rfc1 can be replaced by either ctf18 or elg1 to form the ctf18-RFC or the elg1-RFC complexes respectively.

It localises to the nucleus. The elongation of primed DNA templates by DNA polymerase delta and epsilon requires the action of the accessory proteins PCNA and activator 1. Subunit 2 binds ATP and single-stranded DNA. The protein is Replication factor C subunit 2 (rfc2) of Schizosaccharomyces pombe (strain 972 / ATCC 24843) (Fission yeast).